The primary structure comprises 287 residues: Uroplakin-3a (287 aa).

A signal peptide spans 1-18 (MPPLWALLALGCLRFGSA). Over 19–207 (VNLQPQLASV…DTWPGRRSGG (189 aa)) the chain is Lumenal. Asn-74, Asn-139, and Asn-170 each carry an N-linked (GlcNAc...) asparagine glycan. The helical transmembrane segment at 208–235 (MIVITSILGSLPFFLLVGFAGAIALSLV) threads the bilayer. Topologically, residues 236–287 (DMGSSDGETTHDSQITQEAVPKSLGASESSYTSVNRGPPLDRAEVYSSKLQD) are cytoplasmic. Residues 242-287 (GETTHDSQITQEAVPKSLGASESSYTSVNRGPPLDRAEVYSSKLQD) are disordered. Residues 261 to 270 (ASESSYTSVN) are compositionally biased toward polar residues.

Belongs to the uroplakin-3 family. As to quaternary structure, heterodimer with uroplakin-1B (UPK1B). Expressed in ureter.

It is found in the endoplasmic reticulum membrane. Functionally, component of the asymmetric unit membrane (AUM); a highly specialized biomembrane elaborated by terminally differentiated urothelial cells. May play an important role in AUM-cytoskeleton interaction in terminally differentiated urothelial cells. It also contributes to the formation of urothelial glycocalyx which may play an important role in preventing bacterial adherence. The chain is Uroplakin-3a (UPK3A) from Homo sapiens (Human).